Here is a 321-residue protein sequence, read N- to C-terminus: MTKYALVGDVGGTNARLALCDIASGEISQAKTYSGLDYPSLEAVVRVYLDEHSVSVEDGCIAIACPITGDWVAMTNHTWAFSIAEMKKNLGFSHLEIINDFTAVSMAIPMLKKEHLIQFGGGEPVDGKPIAVYGAGTGLGVAHLVHVDKRWISLPGEGGHVDFAPNSEEEAMILEILRAEIGHVSAERVLSGPGLVNLYRAIVKSDNRLPENLRPKDITERALADNCIDCRRALSLFCVIMGRFGGDLALTMGTFGGVYIAGGIVPRFLEFFKASGFRGGFEDKGRFKDYVHGIPVYLIVHDNPGLLGSGAHLRQTLGHIL.

8–13 (GDVGGT) serves as a coordination point for ATP.

Belongs to the bacterial glucokinase family.

Its subcellular location is the cytoplasm. It catalyses the reaction D-glucose + ATP = D-glucose 6-phosphate + ADP + H(+). The sequence is that of Glucokinase from Salmonella choleraesuis (strain SC-B67).